The sequence spans 392 residues: uncharacterized protein (392 aa).

10 consecutive transmembrane segments (helical) span residues 2–23 (WLANFFVSASTTMIVPFLSLYI), 38–60 (SGYVFGITFLMAFLVSPFWGRFG), 73–95 (GTGIALSIFFMGFVTSVYQLFFL), 153–175 (FTYTFFITSFVIFSSVLLVLFGV), 195–217 (VLSYIFHHPALWVMMLLTMLIQT), 237–259 (VNLAFFSGMAFSATGLGSLLLAR), 272–291 (RILIGLLLAASFFFIPQALA), 297–319 (LLVFRFLFGMAMGGLLPCITAAI), 331–353 (VLGYNVSFRFLGNVLGPLLGGII), and 357–379 (FTISATFYVTAFLFFAGACMLWI).

Belongs to the major facilitator superfamily.

The protein localises to the cell membrane. This is an uncharacterized protein from Bacillus subtilis (strain 168).